Here is a 282-residue protein sequence, read N- to C-terminus: uncharacterized protein (282 aa).

In terms of domain architecture, HTH rpiR-type spans 4–80 (STLTSKLESL…VDYLSDEKQY (77 aa)). A DNA-binding region (H-T-H motif) is located at residues 40 to 59 (VAELAQAAGVSSASVIRFTR). An SIS domain is found at 125–265 (IAQKIVEAKR…FFKYLTLTNE (141 aa)).

This is an uncharacterized protein from Providencia stuartii.